The following is a 104-amino-acid chain: MGGYGVMADEESLDYSVHEAWNEATNVYLLVILVSFALLMYARKNKRKIMRIFTLPPTVGSSSEPNFYDSLQKVRLRQQLEMYSLARKYDQQQSQSESVQLSME.

Residues 20 to 42 (AWNEATNVYLLVILVSFALLMYA) form a helical membrane-spanning segment.

Belongs to the SMIM19 family.

It localises to the membrane. This Danio rerio (Zebrafish) protein is Small integral membrane protein 19 (smim19).